A 572-amino-acid chain; its full sequence is Receptor-type adenylate cyclase GRESAG 4.2 (572 aa).

The Extracellular segment spans residues 1–225; the sequence is RKTLLTFGLN…PNGNALTPAQ (225 aa). Residues Asn-10, Asn-77, and Asn-152 are each glycosylated (N-linked (GlcNAc...) asparagine). The helical transmembrane segment at 226–251 threads the bilayer; it reads LDWCGWCRFACADTGSRLTVFLCCIM. Topologically, residues 252–572 are cytoplasmic; that stretch reads RNKRDNDNAP…TVRRLSVALQ (321 aa). The Guanylate cyclase domain occupies 269 to 424; it reads TLIFTDIESS…QTANTAARTE (156 aa). Positions 274 and 317 each coordinate Mg(2+).

This sequence belongs to the adenylyl cyclase class-3 family. Requires Mg(2+) as cofactor.

Its subcellular location is the cell membrane. The enzyme catalyses ATP = 3',5'-cyclic AMP + diphosphate. Its function is as follows. Could act as a receptor for an unknown ligand. The polypeptide is Receptor-type adenylate cyclase GRESAG 4.2 (GRESAG 4.2) (Trypanosoma brucei brucei).